A 102-amino-acid chain; its full sequence is Small ribosomal subunit protein uS10 (102 aa).

Belongs to the universal ribosomal protein uS10 family. In terms of assembly, part of the 30S ribosomal subunit.

Functionally, involved in the binding of tRNA to the ribosomes. The chain is Small ribosomal subunit protein uS10 from Rhodospirillum rubrum (strain ATCC 11170 / ATH 1.1.1 / DSM 467 / LMG 4362 / NCIMB 8255 / S1).